Reading from the N-terminus, the 558-residue chain is Formate--tetrahydrofolate ligase (558 aa).

67–74 (TPAGEGKT) contributes to the ATP binding site.

This sequence belongs to the formate--tetrahydrofolate ligase family.

The enzyme catalyses (6S)-5,6,7,8-tetrahydrofolate + formate + ATP = (6R)-10-formyltetrahydrofolate + ADP + phosphate. It participates in one-carbon metabolism; tetrahydrofolate interconversion. In Roseobacter denitrificans (strain ATCC 33942 / OCh 114) (Erythrobacter sp. (strain OCh 114)), this protein is Formate--tetrahydrofolate ligase.